A 212-amino-acid polypeptide reads, in one-letter code: Redox-sensing transcriptional repressor Rex (212 aa).

Positions 17–56 form a DNA-binding region, H-T-H motif; the sequence is LYARSLRYLLEEGVHSVSSQELGERINVTAAQIRKDLSYF. An NAD(+)-binding site is contributed by 91–96; it reads GIGLLG.

The protein belongs to the transcriptional regulatory Rex family. As to quaternary structure, homodimer.

The protein resides in the cytoplasm. Functionally, modulates transcription in response to changes in cellular NADH/NAD(+) redox state. This chain is Redox-sensing transcriptional repressor Rex, found in Chloroflexus aurantiacus (strain ATCC 29366 / DSM 635 / J-10-fl).